The following is a 345-amino-acid chain: Methylthioribose-1-phosphate isomerase (345 aa).

Substrate-binding positions include 47 to 49 (RGA), arginine 90, and glutamine 197. Aspartate 238 serves as the catalytic Proton donor. 248-249 (NK) is a binding site for substrate.

The protein belongs to the eIF-2B alpha/beta/delta subunits family. MtnA subfamily.

It catalyses the reaction 5-(methylsulfanyl)-alpha-D-ribose 1-phosphate = 5-(methylsulfanyl)-D-ribulose 1-phosphate. It participates in amino-acid biosynthesis; L-methionine biosynthesis via salvage pathway; L-methionine from S-methyl-5-thio-alpha-D-ribose 1-phosphate: step 1/6. Catalyzes the interconversion of methylthioribose-1-phosphate (MTR-1-P) into methylthioribulose-1-phosphate (MTRu-1-P). This is Methylthioribose-1-phosphate isomerase from Thermoanaerobacter pseudethanolicus (strain ATCC 33223 / 39E) (Clostridium thermohydrosulfuricum).